The chain runs to 187 residues: Transcriptional repressor NrdR (187 aa).

A zinc finger lies at 3–34 (CPFCRHPDSRVVDSRTTDDGTSIRRRRQCPDC). Positions 46–136 (LMVVKRSGVT…VYRAFDSLED (91 aa)) constitute an ATP-cone domain. The interval 146–187 (EEQRERPAVDDEDHEDAGAERQGTDRGSGGTVEVPVPATVAD) is disordered.

The protein belongs to the NrdR family. The cofactor is Zn(2+).

Its function is as follows. Negatively regulates transcription of bacterial ribonucleotide reductase nrd genes and operons by binding to NrdR-boxes. This is Transcriptional repressor NrdR from Streptomyces avermitilis (strain ATCC 31267 / DSM 46492 / JCM 5070 / NBRC 14893 / NCIMB 12804 / NRRL 8165 / MA-4680).